We begin with the raw amino-acid sequence, 386 residues long: MSRTLQLTEQLISLPSVTPEDAGCLELLADALQPMGFACERIDSGPDSFRVRNLWARRSGTGADRPVLVFAGHTDVVPTGPLEQWSSPPFVPTHRDGKLYGRGASDMKTSIAAFVVALEEFLAETPAPSFDIALLLTSDEEGPSVDGTKVVVELLRERGERLDWCIVGEPTSVERTGDMIKNGRRGTMSGRLTVKGIQGHIAYPQLARNPIHQALPALAELAATRWDEGNAFFPPTSWQISNMHGGTGASNVIPGHVTIDFNFRFCTESTAESLQQRVHAVLDHHGLEYELAWTIGGQPFLTTPGTLVNAVQAAIRAETGLETELSTTGGTSDGRFIAQICSQVVEVGPSNASIHKIDEHIVVADIEPIKNIYRRTLQELQRQQAV.

Histidine 73 contacts Zn(2+). Aspartate 75 is a catalytic residue. Aspartate 106 is a binding site for Zn(2+). Glutamate 140 acts as the Proton acceptor in catalysis. Zn(2+) is bound by residues glutamate 141, glutamate 169, and histidine 355.

Belongs to the peptidase M20A family. DapE subfamily. In terms of assembly, homodimer. Zn(2+) is required as a cofactor. It depends on Co(2+) as a cofactor.

It catalyses the reaction N-succinyl-(2S,6S)-2,6-diaminopimelate + H2O = (2S,6S)-2,6-diaminopimelate + succinate. It participates in amino-acid biosynthesis; L-lysine biosynthesis via DAP pathway; LL-2,6-diaminopimelate from (S)-tetrahydrodipicolinate (succinylase route): step 3/3. Functionally, catalyzes the hydrolysis of N-succinyl-L,L-diaminopimelic acid (SDAP), forming succinate and LL-2,6-diaminopimelate (DAP), an intermediate involved in the bacterial biosynthesis of lysine and meso-diaminopimelic acid, an essential component of bacterial cell walls. The polypeptide is Succinyl-diaminopimelate desuccinylase (Delftia acidovorans (strain DSM 14801 / SPH-1)).